The primary structure comprises 334 residues: L-lactate dehydrogenase B chain (334 aa).

At Ala2 the chain carries N-acetylalanine. An N6-acetyllysine modification is found at Lys7. Residues 30-58 and Arg100 each bind NAD(+); that span reads GQVGMACAISILGKSLADELALVDVLEDK. Position 44 is a phosphoserine (Ser44). Lys58 bears the N6-acetyllysine mark. Arg107 provides a ligand contact to substrate. Lys119 bears the N6-acetyllysine mark. Residue Asn139 coordinates NAD(+). Substrate contacts are provided by Asn139 and Arg170. The Proton acceptor role is filled by His194. The residue at position 240 (Tyr240) is a Phosphotyrosine. Substrate is bound at residue Thr249. Position 329 is an N6-acetyllysine (Lys329).

Belongs to the LDH/MDH superfamily. LDH family. In terms of assembly, homotetramer. Interacts with PTEN upstream reading frame protein MP31; the interaction leads to inhibition of mitochondrial lactate dehydrogenase activity, preventing conversion of lactate to pyruvate in mitochondria.

Its subcellular location is the cytoplasm. The protein localises to the mitochondrion inner membrane. The enzyme catalyses (S)-lactate + NAD(+) = pyruvate + NADH + H(+). Its pathway is fermentation; pyruvate fermentation to lactate; (S)-lactate from pyruvate: step 1/1. Functionally, interconverts simultaneously and stereospecifically pyruvate and lactate with concomitant interconversion of NADH and NAD(+). This is L-lactate dehydrogenase B chain (Ldhb) from Rattus norvegicus (Rat).